Consider the following 197-residue polypeptide: Glycerol-3-phosphate acyltransferase (197 aa).

The next 5 membrane-spanning stretches (helical) occupy residues 2–22 (LDVILVIIGYLIGSISSAIVV), 53–73 (AGITLLGDWLKGTLPVLLAWL), 78–98 (PVVASAAGLAAFFGHLFPVYF), 112–132 (VILAWSPLALLATVVTWLAVA), and 152–174 (YMLWLSASPVLTAATAILTAAIV).

Belongs to the PlsY family. As to quaternary structure, probably interacts with PlsX.

The protein localises to the cell inner membrane. It catalyses the reaction an acyl phosphate + sn-glycerol 3-phosphate = a 1-acyl-sn-glycero-3-phosphate + phosphate. Its pathway is lipid metabolism; phospholipid metabolism. Its function is as follows. Catalyzes the transfer of an acyl group from acyl-phosphate (acyl-PO(4)) to glycerol-3-phosphate (G3P) to form lysophosphatidic acid (LPA). This enzyme utilizes acyl-phosphate as fatty acyl donor, but not acyl-CoA or acyl-ACP. The chain is Glycerol-3-phosphate acyltransferase from Halorhodospira halophila (strain DSM 244 / SL1) (Ectothiorhodospira halophila (strain DSM 244 / SL1)).